The following is a 379-amino-acid chain: Succinyl-diaminopimelate desuccinylase (379 aa).

Zn(2+) is bound at residue His70. Asp72 is a catalytic residue. Asp103 serves as a coordination point for Zn(2+). The active-site Proton acceptor is the Glu137. Residues Glu138, Glu166, and His352 each coordinate Zn(2+).

This sequence belongs to the peptidase M20A family. DapE subfamily. As to quaternary structure, homodimer. Zn(2+) is required as a cofactor. The cofactor is Co(2+).

It catalyses the reaction N-succinyl-(2S,6S)-2,6-diaminopimelate + H2O = (2S,6S)-2,6-diaminopimelate + succinate. It participates in amino-acid biosynthesis; L-lysine biosynthesis via DAP pathway; LL-2,6-diaminopimelate from (S)-tetrahydrodipicolinate (succinylase route): step 3/3. Its function is as follows. Catalyzes the hydrolysis of N-succinyl-L,L-diaminopimelic acid (SDAP), forming succinate and LL-2,6-diaminopimelate (DAP), an intermediate involved in the bacterial biosynthesis of lysine and meso-diaminopimelic acid, an essential component of bacterial cell walls. This Shewanella sp. (strain W3-18-1) protein is Succinyl-diaminopimelate desuccinylase.